Here is a 355-residue protein sequence, read N- to C-terminus: Small ribosomal subunit protein uS2 (355 aa).

Belongs to the universal ribosomal protein uS2 family.

The protein is Small ribosomal subunit protein uS2 of Methylorubrum extorquens (strain CM4 / NCIMB 13688) (Methylobacterium extorquens).